The following is a 223-amino-acid chain: Ribose-5-phosphate isomerase A (223 aa).

Residues 29–32 (TGST), 82–85 (DGAD), and 95–98 (KGGG) contribute to the substrate site. Glutamate 104 (proton acceptor) is an active-site residue. Residue lysine 122 participates in substrate binding.

The protein belongs to the ribose 5-phosphate isomerase family. Homodimer.

It carries out the reaction aldehydo-D-ribose 5-phosphate = D-ribulose 5-phosphate. The protein operates within carbohydrate degradation; pentose phosphate pathway; D-ribose 5-phosphate from D-ribulose 5-phosphate (non-oxidative stage): step 1/1. Functionally, catalyzes the reversible conversion of ribose-5-phosphate to ribulose 5-phosphate. This Neisseria meningitidis serogroup C (strain 053442) protein is Ribose-5-phosphate isomerase A.